The primary structure comprises 354 residues: Methylthioribose-1-phosphate isomerase (354 aa).

Residues 58–60 (RGA), Arg101, and Gln204 contribute to the substrate site. The Proton donor role is filled by Asp245. Substrate is bound at residue 255 to 256 (NK).

The protein belongs to the eIF-2B alpha/beta/delta subunits family. MtnA subfamily.

The enzyme catalyses 5-(methylsulfanyl)-alpha-D-ribose 1-phosphate = 5-(methylsulfanyl)-D-ribulose 1-phosphate. Its pathway is amino-acid biosynthesis; L-methionine biosynthesis via salvage pathway; L-methionine from S-methyl-5-thio-alpha-D-ribose 1-phosphate: step 1/6. Its function is as follows. Catalyzes the interconversion of methylthioribose-1-phosphate (MTR-1-P) into methylthioribulose-1-phosphate (MTRu-1-P). The sequence is that of Methylthioribose-1-phosphate isomerase from Xanthomonas campestris pv. campestris (strain ATCC 33913 / DSM 3586 / NCPPB 528 / LMG 568 / P 25).